The sequence spans 477 residues: Cytochrome P450 716A1 (477 aa).

A helical transmembrane segment spans residues 2-22 (YMAIMIILFLSSILLSLLLLL). Cys424 is a heme binding site.

This sequence belongs to the cytochrome P450 family. Heme is required as a cofactor.

Its subcellular location is the membrane. Its function is as follows. Possesses triterpene oxidizing activity. Catalyzes the C28 hydroxylation of alpha-amyrin, beta-amyrin, and lupeol, producing uvaol, erythrodiol, and betulin, respectively. Catalyzes the C28 carboxylation of alpha- and beta-amyrin. The sequence is that of Cytochrome P450 716A1 from Arabidopsis thaliana (Mouse-ear cress).